A 72-amino-acid chain; its full sequence is MAKDDVIEVEGTVVETLPNAMFKVELENGHTVLAHVSGKIRMHFIRILPGDKVTVELSPYDLTRGRITYRYK.

The S1-like domain maps to 1 to 72; sequence MAKDDVIEVE…TRGRITYRYK (72 aa). Phosphotyrosine is present on Y60.

It belongs to the IF-1 family. In terms of assembly, component of the 30S ribosomal translation pre-initiation complex which assembles on the 30S ribosome in the order IF-2 and IF-3, IF-1 and N-formylmethionyl-tRNA(fMet); mRNA recruitment can occur at any time during PIC assembly.

The protein localises to the cytoplasm. Functionally, one of the essential components for the initiation of protein synthesis. Stabilizes the binding of IF-2 and IF-3 on the 30S subunit to which N-formylmethionyl-tRNA(fMet) subsequently binds. Helps modulate mRNA selection, yielding the 30S pre-initiation complex (PIC). Upon addition of the 50S ribosomal subunit IF-1, IF-2 and IF-3 are released leaving the mature 70S translation initiation complex. This chain is Translation initiation factor IF-1, found in Bacillus licheniformis (strain ATCC 14580 / DSM 13 / JCM 2505 / CCUG 7422 / NBRC 12200 / NCIMB 9375 / NCTC 10341 / NRRL NRS-1264 / Gibson 46).